Consider the following 871-residue polypeptide: Major vault protein (871 aa).

MVP repeat units lie at residues 2–69, 70–124, 125–177, 178–230, 231–285, 286–336, 337–407, 408–482, and 483–545; these read SKRP…VPPR, HYCV…EVTP, LQIV…EIIK, ATVI…DIVN, AFIL…GVVD, VTTL…IQDV, YVLS…RRQA, IPLD…KTMV, and VSYR…LLGP. The segment at 356–381 is disordered; that stretch reads TEAQEEDEEEEEEEEQAKKTSVQRRP. The span at 357–370 shows a compositional bias: acidic residues; that stretch reads EAQEEDEEEEEEEE. Residues 684-710 form a disordered region; the sequence is QEATARHEAERLEQEARGKLERQKITD. A compositionally biased stretch (basic and acidic residues) spans 687 to 710; the sequence is TARHEAERLEQEARGKLERQKITD. Residues 688–717 form the IQ domain; the sequence is ARHEAERLEQEARGKLERQKITDQAEAERA.

In terms of assembly, the vault ribonucleoprotein particle is a huge (400 A x 670 A) cage structure of 12.9 MDa. It consists of a dimer of half-vaults, with each half-vault comprising 39 identical major vault protein (MVP) chains, PARP4 and one or more vault RNAs (vRNAs).

The protein localises to the cytoplasm. Its subcellular location is the nucleus. Required for normal vault structure. Vaults are multi-subunit structures that may act as scaffolds for proteins involved in signal transduction. Vaults may also play a role in nucleo-cytoplasmic transport. This is Major vault protein (mvp) from Ictalurus punctatus (Channel catfish).